A 944-amino-acid polypeptide reads, in one-letter code: Neutral alpha-glucosidase AB (944 aa).

The signal sequence occupies residues 1–32 (MAAVAAVAARRRRSWTGLVLACLGVCLGLTLA). Cys-41 and Cys-47 are joined by a disulfide. Residue Ser-52 is modified to Phosphoserine. Asn-97 is a glycosylation site (N-linked (GlcNAc...) asparagine). The disordered stretch occupies residues 181 to 225 (QRAPRVSQGSKDPAEGDGAQPEEAPGDGDKPEEIQGKAEKDEPGA). A compositionally biased stretch (basic and acidic residues) spans 207–225 (DGDKPEEIQGKAEKDEPGA). Positions 283 and 429 each coordinate substrate. Asp-542 serves as the catalytic Nucleophile. Position 602 (Arg-602) interacts with substrate. The active-site Proton donor is the Asp-618. Cys-633 and Cys-644 form a disulfide bridge. A substrate-binding site is contributed by His-676.

It belongs to the glycosyl hydrolase 31 family. As to quaternary structure, heterodimer of a catalytic alpha subunit (GANAB) and a beta subunit (PRKCSH). Binds glycosylated PTPRC. Post-translationally, contains sialylated polysaccharide chains.

It localises to the endoplasmic reticulum. The protein resides in the golgi apparatus. It is found in the melanosome. The enzyme catalyses N(4)-(alpha-D-Glc-(1-&gt;3)-alpha-D-Man-(1-&gt;2)-alpha-D-Man-(1-&gt;2)-alpha-D-Man-(1-&gt;3)-[alpha-D-Man-(1-&gt;2)-alpha-D-Man-(1-&gt;3)-[alpha-D-Man-(1-&gt;2)-alpha-D-Man-(1-&gt;6)]-alpha-D-Man-(1-&gt;6)]-beta-D-Man-(1-&gt;4)-beta-D-GlcNAc-(1-&gt;4)-beta-D-GlcNAc)-L-asparaginyl-[protein] + H2O = N(4)-(alpha-D-Man-(1-&gt;2)-alpha-D-Man-(1-&gt;2)-alpha-D-Man-(1-&gt;3)-[alpha-D-Man-(1-&gt;2)-alpha-D-Man-(1-&gt;3)-[alpha-D-Man-(1-&gt;2)-alpha-D-Man-(1-&gt;6)]-alpha-D-Man-(1-&gt;6)]-beta-D-Man-(1-&gt;4)-beta-D-GlcNAc-(1-&gt;4)-beta-D-GlcNAc)-L-asparaginyl-[protein] (N-glucan mannose isomer 9A1,2,3B1,2,3) + beta-D-glucose. It carries out the reaction N(4)-(alpha-D-Glc-(1-&gt;3)-alpha-D-Glc-(1-&gt;3)-alpha-D-Man-(1-&gt;2)-alpha-D-Man-(1-&gt;2)-alpha-D-Man-(1-&gt;3)-[alpha-D-Man-(1-&gt;2)-alpha-D-Man-(1-&gt;3)-[alpha-D-Man-(1-&gt;2)-alpha-D-Man-(1-&gt;6)]-alpha-D-Man-(1-&gt;6)]-beta-D-Man-(1-&gt;4)-beta-D-GlcNAc-(1-&gt;4)-beta-D-GlcNAc)-L-asparaginyl-[protein] + H2O = N(4)-(alpha-D-Glc-(1-&gt;3)-alpha-D-Man-(1-&gt;2)-alpha-D-Man-(1-&gt;2)-alpha-D-Man-(1-&gt;3)-[alpha-D-Man-(1-&gt;2)-alpha-D-Man-(1-&gt;3)-[alpha-D-Man-(1-&gt;2)-alpha-D-Man-(1-&gt;6)]-alpha-D-Man-(1-&gt;6)]-beta-D-Man-(1-&gt;4)-beta-D-GlcNAc-(1-&gt;4)-beta-D-GlcNAc)-L-asparaginyl-[protein] + beta-D-glucose. It functions in the pathway glycan metabolism; N-glycan metabolism. Functionally, catalytic subunit of glucosidase II that cleaves sequentially the 2 innermost alpha-1,3-linked glucose residues from the Glc(2)Man(9)GlcNAc(2) oligosaccharide precursor of immature glycoproteins. Required for PKD1/Polycystin-1 and PKD2/Polycystin-2 maturation and localization to the cell surface and cilia. This is Neutral alpha-glucosidase AB (GANAB) from Sus scrofa (Pig).